We begin with the raw amino-acid sequence, 708 residues long: Leukotoxin translocation ATP-binding protein LktB (708 aa).

Positions 1 to 126 (MEANHQRNDL…ACYQGQLILV (126 aa)) constitute a Peptidase C39 domain. An ABC transmembrane type-1 domain is found at 155 to 437 (FLETLIVSIF…LAQLWQDFQQ (283 aa)). 5 helical membrane passes run 159–179 (LIVS…FQVV), 192–212 (LNII…LSGL), 270–290 (ALTS…MWYY), 296–316 (LVIL…SPIL), and 389–409 (VMVI…LSIG). The ABC transporter domain maps to 469–704 (ISFKNIRFRY…SNGLYSYLHQ (236 aa)). 503-510 (GRSGSGKS) is a binding site for ATP.

It belongs to the ABC transporter superfamily. Protein-1 exporter (TC 3.A.1.109) family. As to quaternary structure, homodimer.

Its subcellular location is the cell inner membrane. It carries out the reaction ATP + H2O + proteinSide 1 = ADP + phosphate + proteinSide 2.. In terms of biological role, part of the ABC transporter complex LktBD involved in leukotoxin export. Transmembrane domains (TMD) form a pore in the inner membrane and the ATP-binding domain (NBD) is responsible for energy generation. The polypeptide is Leukotoxin translocation ATP-binding protein LktB (lktB) (Mannheimia haemolytica (Pasteurella haemolytica)).